The chain runs to 349 residues: S-adenosylmethionine:tRNA ribosyltransferase-isomerase (349 aa).

The protein belongs to the QueA family. Monomer.

It localises to the cytoplasm. The catalysed reaction is 7-aminomethyl-7-carbaguanosine(34) in tRNA + S-adenosyl-L-methionine = epoxyqueuosine(34) in tRNA + adenine + L-methionine + 2 H(+). It participates in tRNA modification; tRNA-queuosine biosynthesis. Its function is as follows. Transfers and isomerizes the ribose moiety from AdoMet to the 7-aminomethyl group of 7-deazaguanine (preQ1-tRNA) to give epoxyqueuosine (oQ-tRNA). The sequence is that of S-adenosylmethionine:tRNA ribosyltransferase-isomerase from Flavobacterium psychrophilum (strain ATCC 49511 / DSM 21280 / CIP 103535 / JIP02/86).